The sequence spans 607 residues: BTB/POZ domain-containing protein DOT3 (607 aa).

The BTB domain maps to 52–121 (TDLSIQVNDI…CYNLPLDLNP (70 aa)). Positions 211–487 (RCLYNDIATL…VQINTQVLFS (277 aa)) constitute an NPH3 domain. A Phosphotyrosine modification is found at Tyr-428. 2 disordered regions span residues 498–520 (DKLP…SRDN) and 573–607 (KSFQ…MSMS). Basic and acidic residues-rich tracts occupy residues 499-520 (KLPE…SRDN) and 577-586 (TKREDEETRE). Residues 511–563 (REDKRMSRDNEIIKTLKEELENVKKKMSELQSDYNELQQEYERLSSKQKSSHN) adopt a coiled-coil conformation.

It belongs to the NPH3 family. Expressed in emerging leaf primordia.

Its pathway is protein modification; protein ubiquitination. Its function is as follows. May act as a substrate-specific adapter of an E3 ubiquitin-protein ligase complex (CUL3-RBX1-BTB) which mediates the ubiquitination and subsequent proteasomal degradation of target proteins. Involved in leaf vasculature patterning. The sequence is that of BTB/POZ domain-containing protein DOT3 from Arabidopsis thaliana (Mouse-ear cress).